Reading from the N-terminus, the 247-residue chain is Lipoprotein-releasing system ATP-binding protein LolD 2 (247 aa).

One can recognise an ABC transporter domain in the interval 19-247; that stretch reads LEARKLVKSY…QDGRLQACGG (229 aa). 56–63 serves as a coordination point for ATP; the sequence is GASGSGKT.

The protein belongs to the ABC transporter superfamily. Lipoprotein translocase (TC 3.A.1.125) family. As to quaternary structure, the complex is composed of two ATP-binding proteins (LolD) and two transmembrane proteins (LolC and LolE).

It localises to the cell inner membrane. Part of the ABC transporter complex LolCDE involved in the translocation of mature outer membrane-directed lipoproteins, from the inner membrane to the periplasmic chaperone, LolA. Responsible for the formation of the LolA-lipoprotein complex in an ATP-dependent manner. This chain is Lipoprotein-releasing system ATP-binding protein LolD 2, found in Chlorobaculum tepidum (strain ATCC 49652 / DSM 12025 / NBRC 103806 / TLS) (Chlorobium tepidum).